Here is an 826-residue protein sequence, read N- to C-terminus: MGKKRTKGKTVPIDDSSESLEPVCRHIRKGLEQGNLKKALVNVEWNICQDCKTDNKVKDKSEEETEENPSVWLCLKCGHQGCGRNSQEQHALKHYMKPRSEPHCLVLSLDNWSVWCYLCDDEVHYCNSNRLGQVVDYVRKQAGNTTPESAEDNGNIELENKKLEKESKNEQEREKKENMARENPSMNSTSQITVKGLSNLGNTCFFNAVMQNLSQTPVLRELLKEVKMSGTIVKIEPPDLALTEPLEINLEPPGPLTLAMSQFLNEMQETKKGIVTPRELFSQVCKKAVRFKGYQQQDSQELLRYLLDGMRAEEHQRVSKGILKAFDNSTEKVDEELKNKVKEYEKKKSVPSFVDRIFGGELTSTIMCDECRTVSLVHESFLDLSLPVLDDQSGKKSINDKNLKKTMEDEDKDSEEEKDNDSYLKERNDIPSGTSKHLQKKAKKQAKKQAKNQRRQQKIQGKVLHLNDVYAIDHPEDNECEVEMSLQREADIKSNHISQEEVAPKEYCVNQKDLNGHEKMIESITDNQKSTEEAAMKNVSVDNDLEVLASSATECPRNLNGAYLKEGSNGEVDISSGFENLNLNAALQPDEINIEILDDDPTPGTKVYEVVNEDPETAFCTLANREAFNTDECSVQHCLYQFTRNEKLRDANKLLCEVCTRRQYSGPKANMKGERKHIYTNAKKQMLISLAPPVLTLHFKRFQQAGFNLRKVNKHIKFPEILDLAPFCTLKCKNVAEEHTRVLYSLYGVVEHSGTMRSGHYTAYAKTRTASTHLSNLVLHGDIPQDFEMESTKGQWFHISDTHVQAVPTTKVLSSQAYLLFYERIL.

The UBP-type zinc finger occupies Pro22 to Ala142. Zn(2+)-binding residues include Cys24, His26, Cys48, Cys51, Cys74, Cys77, Cys82, His90, His94, His103, Cys116, and Cys119. Lys140 is covalently cross-linked (Glycyl lysine isopeptide (Lys-Gly) (interchain with G-Cter in SUMO2)). The segment at Asn144–Thr189 is disordered. Basic and acidic residues predominate over residues Leu158–Ala180. The residue at position 188 (Ser188) is a Phosphoserine. The region spanning Lys195–Ile825 is the USP domain. The active-site Nucleophile is Cys204. The segment covering Ser393–Met407 has biased composition (basic and acidic residues). The segment at Ser393–Lys458 is disordered. The span at Glu408–Asp419 shows a compositional bias: acidic residues. Ser414 bears the Phosphoserine mark. Over residues Asn420–Asp429 the composition is skewed to basic and acidic residues. The segment covering His437 to Gln457 has biased composition (basic residues). Ser530 and Ser551 each carry phosphoserine. The active-site Proton acceptor is the His760.

It belongs to the peptidase C19 family. USP16 subfamily. In terms of assembly, homotetramer. Associates with late pre-40S ribosomes. Interacts with CEP78; promoting deubiquitination of tektins. Post-translationally, phosphorylated at the onset of mitosis and dephosphorylated during the metaphase/anaphase transition. Phosphorylation by AURKB enhances the deubiquitinase activity.

Its subcellular location is the nucleus. It carries out the reaction Thiol-dependent hydrolysis of ester, thioester, amide, peptide and isopeptide bonds formed by the C-terminal Gly of ubiquitin (a 76-residue protein attached to proteins as an intracellular targeting signal).. In terms of biological role, specifically deubiquitinates 'Lys-120' of histone H2A (H2AK119Ub), a specific tag for epigenetic transcriptional repression, thereby acting as a coactivator. Deubiquitination of histone H2A is a prerequisite for subsequent phosphorylation at 'Ser-11' of histone H3 (H3S10ph), and is required for chromosome segregation when cells enter into mitosis. In resting B- and T-lymphocytes, phosphorylation by AURKB leads to enhance its activity, thereby maintaining transcription in resting lymphocytes. Regulates Hox gene expression via histone H2A deubiquitination. Prefers nucleosomal substrates. Does not deubiquitinate histone H2B. Also deubiquitinates non-histone proteins, such as ribosomal protein RPS27A: deubiquitination of monoubiquitinated RPS27A promotes maturation of the 40S ribosomal subunit. Also mediates deubiquitination of tektin proteins (TEKT1, TEKT2, TEK3, TEKT4 and TEKT5), promoting their stability. This chain is Ubiquitin carboxyl-terminal hydrolase 16, found in Bos taurus (Bovine).